The sequence spans 308 residues: Pantothenate kinase (308 aa).

Position 90-97 (90-97) interacts with ATP; the sequence is GSVAVGKS.

It belongs to the prokaryotic pantothenate kinase family.

The protein resides in the cytoplasm. The enzyme catalyses (R)-pantothenate + ATP = (R)-4'-phosphopantothenate + ADP + H(+). The protein operates within cofactor biosynthesis; coenzyme A biosynthesis; CoA from (R)-pantothenate: step 1/5. This is Pantothenate kinase from Sorangium cellulosum (strain So ce56) (Polyangium cellulosum (strain So ce56)).